The primary structure comprises 89 residues: Conotoxin Bu5 (89 aa).

A signal peptide spans 1 to 22; sequence MKLTCVLIVAVLFLTACQLATA. Residues 23 to 49 constitute a propeptide that is removed on maturation; the sequence is ENSREEQGYSAVRSSDQIQDSDLKLTK. 3 cysteine pairs are disulfide-bonded: cysteine 51–cysteine 66, cysteine 58–cysteine 70, and cysteine 65–cysteine 79. Position 79 is a cysteine amide (cysteine 79). A propeptide spanning residues 80–89 is cleaved from the precursor; it reads GVSIDYYDSR.

This sequence belongs to the conotoxin O1 superfamily. As to expression, expressed by the venom duct.

Its subcellular location is the secreted. The protein is Conotoxin Bu5 of Conus bullatus (Bubble cone).